A 284-amino-acid chain; its full sequence is Bifunctional protein FolD (284 aa).

Residues 166-168 (GAS) and I232 each bind NADP(+).

Belongs to the tetrahydrofolate dehydrogenase/cyclohydrolase family. Homodimer.

The enzyme catalyses (6R)-5,10-methylene-5,6,7,8-tetrahydrofolate + NADP(+) = (6R)-5,10-methenyltetrahydrofolate + NADPH. It carries out the reaction (6R)-5,10-methenyltetrahydrofolate + H2O = (6R)-10-formyltetrahydrofolate + H(+). It functions in the pathway one-carbon metabolism; tetrahydrofolate interconversion. Its function is as follows. Catalyzes the oxidation of 5,10-methylenetetrahydrofolate to 5,10-methenyltetrahydrofolate and then the hydrolysis of 5,10-methenyltetrahydrofolate to 10-formyltetrahydrofolate. This Pseudomonas fluorescens (strain Pf0-1) protein is Bifunctional protein FolD.